A 54-amino-acid chain; its full sequence is Ovomucoid (54 aa).

The Kazal-like domain occupies 4 to 54 (VDCSDYPKPVCSPENMPVCGSDSKTYSNKCDFCNAVADSNGTLTLSHFGKC). 3 disulfides stabilise this stretch: Cys6–Cys36, Cys14–Cys33, and Cys22–Cys54. Asn43 is a glycosylation site (N-linked (GlcNAc...) asparagine).

The protein localises to the secreted. The chain is Ovomucoid from Nycticorax nycticorax (Black-crowned night-heron).